The chain runs to 219 residues: MLSSFFLTQHLEAGTDEAGRGCLAGPVTAAAVILPENFESKILNDSKQLSEKTREQLKPIIEALAISFSVTHLDPLIIDEINILNASLKAMQECVLQLNPTPLYIIADGNRPLLSKNSFKKCSGKIFTNREIEILQSIPSSSIIKGDSKYLSIAAASVLAKTYRDEYMNTIHEEFPMYNWKKNKGYPTKEHREAIRKYGVTKYHRMTFRLLPEQTVLDL.

The RNase H type-2 domain maps to 10–219; it reads HLEAGTDEAG…LLPEQTVLDL (210 aa). A divalent metal cation contacts are provided by Asp-16, Glu-17, and Asp-108.

This sequence belongs to the RNase HII family. Requires Mn(2+) as cofactor. Mg(2+) serves as cofactor.

It localises to the cytoplasm. The enzyme catalyses Endonucleolytic cleavage to 5'-phosphomonoester.. Endonuclease that specifically degrades the RNA of RNA-DNA hybrids. The polypeptide is Ribonuclease HII (Flavobacterium psychrophilum (strain ATCC 49511 / DSM 21280 / CIP 103535 / JIP02/86)).